An 87-amino-acid polypeptide reads, in one-letter code: Small ribosomal subunit protein uS15 (87 aa).

Belongs to the universal ribosomal protein uS15 family. As to quaternary structure, part of the 30S ribosomal subunit. Forms a bridge to the 50S subunit in the 70S ribosome, contacting the 23S rRNA.

Its function is as follows. One of the primary rRNA binding proteins, it binds directly to 16S rRNA where it helps nucleate assembly of the platform of the 30S subunit by binding and bridging several RNA helices of the 16S rRNA. Functionally, forms an intersubunit bridge (bridge B4) with the 23S rRNA of the 50S subunit in the ribosome. In Ruminiclostridium cellulolyticum (strain ATCC 35319 / DSM 5812 / JCM 6584 / H10) (Clostridium cellulolyticum), this protein is Small ribosomal subunit protein uS15.